Consider the following 122-residue polypeptide: MPRFSHLIGCVWQVLFVSAGAQAMASSFVVPSTAQMAGQLGIEATGSGVCAGPAEQANALAGDVACAEQWLGDKPVSWSPTPDGIWLMNAEGTGITHLNRQKEGEYTGRTPSGADVTLQRTN.

The signal sequence occupies residues 1–25; it reads MPRFSHLIGCVWQVLFVSAGAQAMA. The disordered stretch occupies residues 101 to 122; the sequence is QKEGEYTGRTPSGADVTLQRTN.

Belongs to the protease inhibitor I38 family.

The protein resides in the periplasm. Its function is as follows. Inhibitor of the alkaline protease. The sequence is that of Alkaline proteinase inhibitor (inh) from Pseudomonas tolaasii.